The following is a 113-amino-acid chain: U11-theraphotoxin-Hhn1o (113 aa).

Positions 1 to 21 (MNTVRVTFLLVFVLAVSLGQA) are cleaved as a signal peptide. Positions 22–74 (DKDENRMEMQEKTEQGKSYLDFAENLLLQKLEELEAKLLEEDSEESRNSRQKR) are excised as a propeptide. Residues 61–83 (EEDSEESRNSRQKRCIGEGVPCD) are disordered. Intrachain disulfides connect Cys75–Cys90 and Cys82–Cys95.

It belongs to the neurotoxin 14 (magi-1) family. 01 (HNTX-16) subfamily. In terms of tissue distribution, expressed by the venom gland.

Its subcellular location is the secreted. Probable ion channel inhibitor. The chain is U11-theraphotoxin-Hhn1o from Cyriopagopus hainanus (Chinese bird spider).